The sequence spans 200 residues: Glutathione peroxidase 1 (200 aa).

Ser-31 carries the post-translational modification Phosphoserine. Residue Sec-46 is part of the active site. Sec-46 is a non-standard amino acid (selenocysteine). An N6-acetyllysine; alternate mark is found at Lys-85 and Lys-111. Lys-85 and Lys-111 each carry N6-succinyllysine; alternate. N6-acetyllysine is present on Lys-118. Lys-145 carries the post-translational modification N6-acetyllysine; alternate. Lys-145 is subject to N6-succinyllysine; alternate. Ser-194 carries the post-translational modification Phosphoserine.

The protein belongs to the glutathione peroxidase family. Homotetramer. Interacts with MIEN1. In terms of processing, during periods of oxidative stress, Sec-46 may react with a superoxide radical, irreversibly lose hydroselenide and be converted to dehydroalanine.

The protein resides in the cytoplasm. The protein localises to the mitochondrion. The enzyme catalyses 2 glutathione + H2O2 = glutathione disulfide + 2 H2O. It carries out the reaction a hydroperoxy polyunsaturated fatty acid + 2 glutathione = a hydroxy polyunsaturated fatty acid + glutathione disulfide + H2O. It catalyses the reaction tert-butyl hydroperoxide + 2 glutathione = tert-butanol + glutathione disulfide + H2O. The catalysed reaction is cumene hydroperoxide + 2 glutathione = 2-phenylpropan-2-ol + glutathione disulfide + H2O. The enzyme catalyses (13S)-hydroperoxy-(9Z,11E)-octadecadienoate + 2 glutathione = (13S)-hydroxy-(9Z,11E)-octadecadienoate + glutathione disulfide + H2O. It carries out the reaction (9S)-hydroperoxy-(10E,12Z)-octadecadienoate + 2 glutathione = (9S)-hydroxy-(10E,12Z)-octadecadienoate + glutathione disulfide + H2O. It catalyses the reaction (5S)-hydroperoxy-(6E,8Z,11Z,14Z)-eicosatetraenoate + 2 glutathione = (5S)-hydroxy-(6E,8Z,11Z,14Z)-eicosatetraenoate + glutathione disulfide + H2O. The catalysed reaction is (12S)-hydroperoxy-(5Z,8Z,10E,14Z)-eicosatetraenoate + 2 glutathione = (12S)-hydroxy-(5Z,8Z,10E,14Z)-eicosatetraenoate + glutathione disulfide + H2O. The enzyme catalyses (12R)-hydroperoxy-(5Z,8Z,10E,14Z)-eicosatetraenoate + 2 glutathione = (12R)-hydroxy-(5Z,8Z,10E,14Z)-eicosatetraenoate + glutathione disulfide + H2O. It carries out the reaction (15S)-hydroperoxy-(5Z,8Z,11Z,13E)-eicosatetraenoate + 2 glutathione = (15S)-hydroxy-(5Z,8Z,11Z,13E)-eicosatetraenoate + glutathione disulfide + H2O. It catalyses the reaction (5S)-hydroperoxy-(6E,8Z,11Z,14Z,17Z)-eicosapentaenoate + 2 glutathione = (5S)-hydroxy-(6E,8Z,11Z,14Z,17Z)-eicosapentaenoate + glutathione disulfide + H2O. The catalysed reaction is (12S)-hydroperoxy-(5Z,8Z,10E,14Z,17Z)-eicosapentaenoate + 2 glutathione = (12S)-hydroxy-(5Z,8Z,10E,14Z,17Z)-eicosapentaenoate + glutathione disulfide + H2O. The enzyme catalyses (15S)-hydroperoxy-(5Z,8Z,11Z,13E,17Z)-eicosapentaenoate + 2 glutathione = (15S)-hydroxy-(5Z,8Z,11Z,13E,17Z)-eicosapentaenoate + glutathione disulfide + H2O. It carries out the reaction (15S)-hydroperoxy-(11Z,13E)-eicosadienoate + 2 glutathione = (15S)-hydroxy-(11Z,13E)-eicosadienoate + glutathione disulfide + H2O. It catalyses the reaction (17S)-hydroperoxy-(4Z,7Z,10Z,13Z,15E,19Z)-docosahexaenoate + 2 glutathione = (17S)-hydroxy-(4Z,7Z,10Z,13Z,15E,19Z)-docosahexaenoate + glutathione disulfide + H2O. Its function is as follows. Catalyzes the reduction of hydroperoxides in a glutathione-dependent manner thus regulating cellular redox homeostasis. Can reduce small soluble hydroperoxides such as H2O2, cumene hydroperoxide and tert-butyl hydroperoxide, as well as several fatty acid-derived hydroperoxides. In platelets catalyzes the reduction of 12-hydroperoxyeicosatetraenoic acid, the primary product of the arachidonate 12-lipoxygenase pathway. The protein is Glutathione peroxidase 1 (GPX1) of Oryctolagus cuniculus (Rabbit).